Reading from the N-terminus, the 105-residue chain is Large ribosomal subunit protein bL21 (105 aa).

Belongs to the bacterial ribosomal protein bL21 family. Part of the 50S ribosomal subunit. Contacts protein L20.

Functionally, this protein binds to 23S rRNA in the presence of protein L20. The chain is Large ribosomal subunit protein bL21 from Methylobacterium sp. (strain 4-46).